Here is a 676-residue protein sequence, read N- to C-terminus: DNA-directed RNA polymerase subunit beta' (676 aa).

Residues C69, C71, C87, and C90 each contribute to the Zn(2+) site. Mg(2+)-binding residues include D489, D491, and D493.

Belongs to the RNA polymerase beta' chain family. RpoC1 subfamily. In plastids the minimal PEP RNA polymerase catalytic core is composed of four subunits: alpha, beta, beta', and beta''. When a (nuclear-encoded) sigma factor is associated with the core the holoenzyme is formed, which can initiate transcription. Requires Mg(2+) as cofactor. The cofactor is Zn(2+).

It is found in the plastid. It localises to the chloroplast. It catalyses the reaction RNA(n) + a ribonucleoside 5'-triphosphate = RNA(n+1) + diphosphate. Its function is as follows. DNA-dependent RNA polymerase catalyzes the transcription of DNA into RNA using the four ribonucleoside triphosphates as substrates. The chain is DNA-directed RNA polymerase subunit beta' from Lolium perenne (Perennial ryegrass).